The primary structure comprises 181 residues: Translation initiation factor IF-3 (181 aa).

The protein belongs to the IF-3 family. Monomer.

The protein resides in the cytoplasm. In terms of biological role, IF-3 binds to the 30S ribosomal subunit and shifts the equilibrium between 70S ribosomes and their 50S and 30S subunits in favor of the free subunits, thus enhancing the availability of 30S subunits on which protein synthesis initiation begins. This Idiomarina loihiensis (strain ATCC BAA-735 / DSM 15497 / L2-TR) protein is Translation initiation factor IF-3.